We begin with the raw amino-acid sequence, 98 residues long: Plastocyanin (98 aa).

A Plastocyanin-like domain is found at 1 to 98 (AQIVKLGGDD…AGMKMTITVQ (98 aa)). The Cu cation site is built by H38, C83, H86, and M91.

It belongs to the plastocyanin family. Cu(2+) is required as a cofactor.

It localises to the plastid. The protein resides in the chloroplast thylakoid membrane. Its function is as follows. Participates in electron transfer between P700 and the cytochrome b6-f complex in photosystem I. This chain is Plastocyanin (PETE), found in Ulva arasakii (Sea lettuce).